The chain runs to 246 residues: Probable transcriptional regulatory protein HSM_1763 (246 aa).

It belongs to the TACO1 family.

It localises to the cytoplasm. The sequence is that of Probable transcriptional regulatory protein HSM_1763 from Histophilus somni (strain 2336) (Haemophilus somnus).